The sequence spans 349 residues: Protein RecA (349 aa).

69-76 (GPESSGKT) is an ATP binding site.

It belongs to the RecA family.

The protein localises to the cytoplasm. Its function is as follows. Can catalyze the hydrolysis of ATP in the presence of single-stranded DNA, the ATP-dependent uptake of single-stranded DNA by duplex DNA, and the ATP-dependent hybridization of homologous single-stranded DNAs. It interacts with LexA causing its activation and leading to its autocatalytic cleavage. This chain is Protein RecA, found in Crocosphaera subtropica (strain ATCC 51142 / BH68) (Cyanothece sp. (strain ATCC 51142)).